A 654-amino-acid chain; its full sequence is Collagen alpha-1(XXV) chain (654 aa).

The disordered stretch occupies residues 1-26 (MLLKKHAGKGGGREPRSEDPTPAEQH). The Cytoplasmic portion of the chain corresponds to 1-33 (MLLKKHAGKGGGREPRSEDPTPAEQHCARTMPP). Residues 34-54 (CAVLAALLSVVAVVSCLYLGV) form a helical; Signal-anchor for type II membrane protein membrane-spanning segment. Over 55 to 654 (KTNDLQARIA…GLPMPGCWQK (600 aa)) the chain is Extracellular. Glutamate 113 is subject to Pyrrolidone carboxylic acid (Glu). The segment at 116–168 (SECNCPAGPPGKRGKRGRRGESGPPGQPGPQGPPGPKGDKGEQGDQGPRMVFP) is disordered. The region spanning 121-164 (PAGPPGKRGKRGRRGESGPPGQPGPQGPPGPKGDKGEQGDQGPR) is the Collagen-like 1 domain. A compositionally biased stretch (pro residues) spans 140 to 151 (PGQPGPQGPPGP). The interaction with amyloid-beta peptide stretch occupies residues 181 to 188 (LIKRRLIK). 2 disordered regions span residues 189–426 (GDQG…QGAT) and 445–654 (LTVT…CWQK). Collagen-like domains follow at residues 192–247 (GQAG…QKGS), 249–308 (GAPG…PGSS), 311–370 (GIKG…AGPP), 372–425 (RGER…DQGA), and 447–505 (VTGP…PGLP). Positions 196 to 208 (PPGPPGPPGPRGP) are enriched in pro residues. Low complexity predominate over residues 230 to 245 (PGEQGLMGPLGPPGQK). Positions 280 to 290 (EPGEQGEKGDA) are enriched in basic and acidic residues. Low complexity predominate over residues 336–358 (LPGIKGEPGFIGPQGEPGLPGLP). Basic and acidic residues-rich tracts occupy residues 361–377 (KGER…ERGE) and 398–407 (SKGDRGEKGD). Residues 457-466 (QGLQGPKGEQ) are compositionally biased toward low complexity. Positions 494–503 (GEKGGIGLPG) are enriched in gly residues. A compositionally biased stretch (low complexity) spans 517 to 527 (SGMPGPQGPSI). The segment covering 528–543 (IGPPGPPGPHGPPGPM) has biased composition (pro residues). Residues 571-630 (GEKGAMGEPGPRGPYGLPGKDGEPGLDGFPGPRGEKGDLGEKGEKGFRGVKGEKGEPGQP) form the Collagen-like 7 domain. Residues 603 to 626 (RGEKGDLGEKGEKGFRGVKGEKGE) are compositionally biased toward basic and acidic residues.

Forms homodimers and homotrimers. Binds to the fibrillized forms of amyloid-beta protein 40 (beta-APP40) and amyloid-beta protein 42 (beta-APP42). Found associated with beta-APP42 more frequently than with beta-APP40. Post-translationally, undergoes proteolytic cleavage by furin protease to yield the soluble collagen-like Alzheimer amyloid plaque component. In terms of processing, glycosylated. Hydroxylated on 11% of proline residues and 49% of lysine residues. As to expression, expressed predominantly in brain. Deposited preferentially in primitive or neuritic amyloid plaques which are typical of Alzheimer disease.

The protein resides in the membrane. In terms of biological role, inhibits fibrillization of amyloid-beta peptide during the elongation phase. Has also been shown to assemble amyloid fibrils into protease-resistant aggregates. Binds heparin. This chain is Collagen alpha-1(XXV) chain, found in Homo sapiens (Human).